We begin with the raw amino-acid sequence, 1091 residues long: LRR receptor-like serine/threonine-protein kinase RGI3 (1091 aa).

A signal peptide spans 1–24 (MPPNIYRLSFFSSLLCFFFIPCFS). Residues 25-703 (LDQQGQALLS…TTRNSSVVRL (679 aa)) lie on the Extracellular side of the membrane. Residues 33-56 (LSWKSQLNISGDAFSSWHVADTSP) form an LRR 1 repeat. N-linked (GlcNAc...) asparagine glycosylation occurs at Asn40. Residues Cys57 and Cys64 are joined by a disulfide bond. LRR repeat units follow at residues 67 to 91 (RGEV…SLRS), 92 to 115 (LKSL…EIGD), 116 to 140 (FTEL…IFRL), 142 to 166 (KLKT…NLSG), 168 to 188 (VELM…IGEL), 190 to 213 (NLQV…IGNC), 214 to 237 (ENLV…IGNL), 239 to 261 (RVQT…IGYC), 262 to 285 (TELQ…IGGL), 287 to 309 (KLQS…LGNC), 311 to 332 (ELWL…SFGK), 333 to 357 (LENL…LTNC), 359 to 383 (KLTH…NLRS), 385 to 405 (TMFF…LSQC), 406 to 429 (RELQ…IFGL), 431 to 453 (NLTK…IGNC), 454 to 477 (TNLY…IGNL), 478 to 501 (KNLN…ISGC), 503 to 524 (SLEF…TTLP), 525 to 548 (KSLK…IGLL), 549 to 572 (TELT…ISTC), 574 to 596 (SLQL…LGQI), 598 to 620 (SLAI…RFSD), 621 to 644 (LKNL…LTDL), 645 to 668 (QNLV…PFFR), and 669 to 690 (RLPL…ISTR). Residue Asn104 is glycosylated (N-linked (GlcNAc...) asparagine). A glycan (N-linked (GlcNAc...) asparagine) is linked at Asn163. 5 short sequence motifs (small peptide recognition) span residues 173 to 174 (FD), 195 to 198 (RAGG), 218 to 223 (MLGLAE), Tyr246, and 268 to 270 (YLY). 2 short sequence motifs (small peptide recognition) span residues 316 to 319 (DFSE) and 338 to 340 (ELQ). Asn356 carries N-linked (GlcNAc...) asparagine glycosylation. 2 consecutive short sequence motifs (small peptide recognition) follow at residues 386 to 390 (MFFAW) and 412 to 415 (DLSY). N-linked (GlcNAc...) asparagine glycosylation occurs at Asn431. Residues 434-438 (KLLLL) carry the Small peptide recognition motif. A glycan (N-linked (GlcNAc...) asparagine) is linked at Asn452. The Small peptide recognition motif lies at 458 to 460 (RLR). N-linked (GlcNAc...) asparagine glycosylation occurs at Asn604. The N-linked (GlcNAc...) asparagine glycan is linked to Asn651. A glycan (N-linked (GlcNAc...) asparagine) is linked at Asn697. Residues 704–724 (TILILVVVTAVLVLMAVYTLV) form a helical membrane-spanning segment. Residues 725 to 1091 (RARAAGKQLL…CSFAFSDDSV (367 aa)) lie on the Cytoplasmic side of the membrane. The Protein kinase domain occupies 760–1046 (LTSANVIGTG…MLTEIRHIDV (287 aa)). ATP is bound by residues 766-774 (IGTGSSGVV) and Lys788. A phosphotyrosine mark is found at Tyr831 and Tyr870. Catalysis depends on Asp883, which acts as the Proton acceptor. At Tyr933 the chain carries Phosphotyrosine.

It belongs to the protein kinase superfamily. Ser/Thr protein kinase family. As to quaternary structure, binds to RGF peptides such as RGF1, GLV5/CLEL1/RGF2, GLV7/CLEL3/RGF3, GLV3/RGF4, GLV10/CLEL7/RGF5 and RGF10/CLELN; these interactions trigger the formation of heterodimers with SERK1, SERK2 or BAK1/SERK3 via LRR regions. Post-translationally, phosphorylated and ubiquitinated upon interaction with RGF1, thus leading to activation a subsequent degradation. In terms of processing, autophosphorylated. Expressed in roots.

Its subcellular location is the cell membrane. It carries out the reaction L-seryl-[protein] + ATP = O-phospho-L-seryl-[protein] + ADP + H(+). The enzyme catalyses L-threonyl-[protein] + ATP = O-phospho-L-threonyl-[protein] + ADP + H(+). Functionally, together with RGI1, RGI2, RGI4 and RGI5, acts as a receptor of RGF peptides (e.g. RGF1, GLV5/CLEL1/RGF2, GLV7/CLEL3/RGF3, GLV3/RGF4, GLV10/CLEL7/RGF5 and RGF10/CLELN), peptide hormones which maintain the postembryonic root stem cell niche by regulating the expression levels and patterns of the transcription factor PLETHORA (PLT, e.g. PLT1 and PLT2). Links RGF peptides signal with their downstream components. This Arabidopsis thaliana (Mouse-ear cress) protein is LRR receptor-like serine/threonine-protein kinase RGI3.